The sequence spans 85 residues: U4-theraphotoxin-Hhn1a (85 aa).

Residues 1–22 (MKVTLIAILTCAAVLVLHTTAA) form the signal peptide. Residues 23 to 48 (EELEAESQPMEVGMPDTELAAVDEER) constitute a propeptide that is removed on maturation. Intrachain disulfides connect cysteine 52–cysteine 66, cysteine 56–cysteine 77, and cysteine 71–cysteine 82.

It belongs to the neurotoxin 12 (Hwtx-2) family. 02 (Hwtx-2) subfamily. As to quaternary structure, monomer. In terms of tissue distribution, expressed by the venom gland.

It is found in the secreted. Functionally, neurotoxin active on both insects and mammals. The polypeptide is U4-theraphotoxin-Hhn1a (Cyriopagopus hainanus (Chinese bird spider)).